Consider the following 280-residue polypeptide: 4-deoxy-L-threo-5-hexosulose-uronate ketol-isomerase (280 aa).

Positions 198, 200, 205, and 247 each coordinate Zn(2+).

This sequence belongs to the KduI family. The cofactor is Zn(2+).

The protein resides in the cytoplasm. The enzyme catalyses 5-dehydro-4-deoxy-D-glucuronate = 3-deoxy-D-glycero-2,5-hexodiulosonate. In terms of biological role, isomerase involved in ulvan degradation. Ulvan is the main polysaccharide component of the Ulvales (green seaweed) cell wall. It is composed of disaccharide building blocks comprising 3-sulfated rhamnose (Rha3S) linked to D-glucuronic acid (GlcA), L-iduronic acid (IduA), or D-xylose (Xyl). Catalyzes the isomerization of 5-dehydro-4-deoxy-D-glucuronate to 3-deoxy-D-glycero-2,5-hexodiulosonate. This is 4-deoxy-L-threo-5-hexosulose-uronate ketol-isomerase from Formosa agariphila (strain DSM 15362 / KCTC 12365 / LMG 23005 / KMM 3901 / M-2Alg 35-1).